The chain runs to 484 residues: SPI-2 type 3 secretion system translocon protein SctE (484 aa).

2 helical membrane-spanning segments follow: residues 85–105 (FLQTNPAVLSMMMTSLILNVF) and 152–172 (GIFGAIFDWITGIFETVIGAL). 2 coiled-coil regions span residues 107-152 (NNAQ…RKAG) and 413-457 (NTEK…LYKG).

It belongs to the SctE/SipB/YopB family. The core secretion machinery of the T3SS is composed of approximately 20 different proteins, including cytoplasmic components, a base, an export apparatus and a needle. This subunit is involved in the formation of a pore, called the translocon, in host membrane. May form a complex with SseB and SseD/SctB2. SseB is required for correct localization of SseC/SctE2 on the bacterial cell surface.

The protein localises to the secreted. It localises to the cell surface. It is found in the host membrane. In terms of biological role, component of the type III secretion system 2 (SPI-2 T3SS), also called injectisome, which is used to inject bacterial effector proteins into eukaryotic host cells. SseC/SctE2 and SseD/SctB2 are inserted into the host membrane where they form a pore and allow the translocation of effector proteins into the cytosol of target cells. Required for the translocation of SPI-2 effector proteins. Required for systemic Salmonella infection of the mouse. Essential for SpvB-induced actin depolymerization in the host cell cytoplasm. This is SPI-2 type 3 secretion system translocon protein SctE from Salmonella typhimurium (strain LT2 / SGSC1412 / ATCC 700720).